A 528-amino-acid chain; its full sequence is MGDSLTLEGKAQLITRNLQELLGEDKMKEILKERPLRIYWGTATTGKPHVAYFVPMSKIADFLKAGCEVTILFADLHAYLDNMKAPWDLLELRTRYYEQVIQAMLQSIGVPLERLRFIRGTEFQLSKEYTLDVYRLSSVVTQHDAKKAGAEVVKQVEHPLLSGLLYPGLQALDEEYLKVDAQFGGVDQRKIFTFAEKYLPALGYAKRIHLMNPMVPGLTGAKMSSSEEESKIDLLDSPADVKKKLKKAFCEPGNVENNGVLSFVRHVLFPLKSEFVVLRDEKFGGNKTYTDFETLEKDFAEELVHPGDLKASVEKALNKLLHPIREKFNSPEMKKLSNDAYPDASKQKSVPKGSTKNSGTEEIDPSLLDLRVGKILSVSQHPDADSLYVESVDVGEANPRCVVSGLVQYVPSDQLLGRSVVLLCNLKPQKMRGIESQGMLLCASTEGEQKQVEPLDPPSGSAPGERIYIEGYENGEPEGELKPKKKVFEKLQVDFRISDDLCAQWKGKNFLTKLGSVTCKTLRGGSIG.

L-tyrosine is bound at residue tyrosine 39. Residues 44–52 (TTGKPHVAY) carry the 'HIGH' region motif. Tyrosine 166, glutamine 170, aspartate 173, and glutamine 188 together coordinate L-tyrosine. The short motif at 222-226 (KMSSS) is the 'KMSKS' region element. The short motif at 242-247 (KKKLKK) is the Nuclear localization signal element. Positions 332-362 (EMKKLSNDAYPDASKQKSVPKGSTKNSGTEE) are disordered. One can recognise a tRNA-binding domain in the interval 364–468 (DPSLLDLRVG…SGSAPGERIY (105 aa)).

This sequence belongs to the class-I aminoacyl-tRNA synthetase family. As to quaternary structure, homodimer.

Its subcellular location is the cytoplasm. The protein localises to the nucleus. It catalyses the reaction tRNA(Tyr) + L-tyrosine + ATP = L-tyrosyl-tRNA(Tyr) + AMP + diphosphate + H(+). In terms of biological role, catalyzes the attachment of tyrosine to tRNA(Tyr) in a two-step reaction: tyrosine is first activated by ATP to form Tyr-AMP and then transferred to the acceptor end of tRNA(Tyr). The protein is Tyrosine--tRNA ligase, cytoplasmic (yars1) of Xenopus laevis (African clawed frog).